The primary structure comprises 224 residues: GTP cyclohydrolase 1 (224 aa).

Positions 1 to 20 (MKQEKTVSPTVENNRSAESR) are disordered. Positions 114, 117, and 185 each coordinate Zn(2+).

The protein belongs to the GTP cyclohydrolase I family. As to quaternary structure, toroid-shaped homodecamer, composed of two pentamers of five dimers.

It catalyses the reaction GTP + H2O = 7,8-dihydroneopterin 3'-triphosphate + formate + H(+). It participates in cofactor biosynthesis; 7,8-dihydroneopterin triphosphate biosynthesis; 7,8-dihydroneopterin triphosphate from GTP: step 1/1. The polypeptide is GTP cyclohydrolase 1 (Chlorobaculum tepidum (strain ATCC 49652 / DSM 12025 / NBRC 103806 / TLS) (Chlorobium tepidum)).